Here is a 504-residue protein sequence, read N- to C-terminus: Serine O-succinyltransferase (504 aa).

The N-terminal 26 residues, 1–26 (MLRASSKRLQLSWQVFRRFQSSNPQL), are a transit peptide targeting the mitochondrion. Residues 49–70 (QACPNSVDPSASITSPSLSSGP) are disordered. Residues 57–70 (PSASITSPSLSSGP) are compositionally biased toward low complexity. In terms of domain architecture, AB hydrolase-1 spans 117–395 (NAILLHTGLS…SAEEIIKLNE (279 aa)). The segment at 124–127 (GLSA) is important for substrate specificity. Residue serine 221 is the Nucleophile of the active site. Arginine 290 is a substrate binding site. Residues aspartate 443 and histidine 480 contribute to the active site. Aspartate 481 is a substrate binding site.

This sequence belongs to the AB hydrolase superfamily. MetX family.

It is found in the mitochondrion. The enzyme catalyses succinyl-CoA + L-serine = O-succinyl-L-serine + CoA. The protein operates within amino-acid biosynthesis; L-cysteine biosynthesis; L-cysteine from L-serine: step 1/2. Its function is as follows. Transfers a succinyl group from succinyl-CoA to L-serine, forming succinyl-L-serine. Also has weak serine acetyl transferase activity and homoserine succinyl transferase activity. The polypeptide is Serine O-succinyltransferase (Schizosaccharomyces pombe (strain 972 / ATCC 24843) (Fission yeast)).